A 309-amino-acid polypeptide reads, in one-letter code: Olfactory receptor 5H2 (309 aa).

Residues 1–28 are Extracellular-facing; that stretch reads MEQDNTTLLTEFVLTGLTYQPEWKMPLF. Asn5 is a glycosylation site (N-linked (GlcNAc...) asparagine). Residues 29 to 49 traverse the membrane as a helical segment; it reads LVFLVIYLITIVWNLGLIALI. Over 50–56 the chain is Cytoplasmic; the sequence is WNDPQLH. A helical transmembrane segment spans residues 57 to 77; sequence IPMYFFLGSLAFVDAWISSTV. Over 78–97 the chain is Extracellular; it reads TPKMLVNFLAKNRMISLSEC. Cys97 and Cys179 are disulfide-bonded. A helical membrane pass occupies residues 98–118; the sequence is MIQFFSFAFGGTTECFLLATM. At 119 to 143 the chain is on the cytoplasmic side; it reads AYDRYVAICKPLLYPVIMNNSLCIR. The chain crosses the membrane as a helical span at residues 144 to 164; sequence LLAFSFLGGFLHALIHEVLIF. Residues 165-193 lie on the Extracellular side of the membrane; that stretch reads RLTFCNSNIIHHFYCDIIPLFMISCTDPS. Residues 194–214 traverse the membrane as a helical segment; that stretch reads INFLMVFILSGSIQVFTIVTV. Residues 215–239 lie on the Cytoplasmic side of the membrane; that stretch reads LNSYTFALFTILKKKSVRGVRKAFS. Residues 240 to 260 traverse the membrane as a helical segment; it reads TCGAHLLSVSLYYGPLIFMYL. The Extracellular portion of the chain corresponds to 261–271; the sequence is RPASPQADDQD. The helical transmembrane segment at 272–292 threads the bilayer; it reads MIDSVFYTIIIPLLNPIIYSL. Over 293–309 the chain is Cytoplasmic; the sequence is RNKQVIDSFTKMVKRNV.

Belongs to the G-protein coupled receptor 1 family.

It localises to the cell membrane. Its function is as follows. Odorant receptor. The chain is Olfactory receptor 5H2 (OR5H2) from Homo sapiens (Human).